The chain runs to 208 residues: LexA repressor (208 aa).

Positions 30–50 (VREICAAVGLSSTSTVHGHLS) form a DNA-binding region, H-T-H motif. Active-site for autocatalytic cleavage activity residues include serine 129 and lysine 167.

The protein belongs to the peptidase S24 family. In terms of assembly, homodimer.

It catalyses the reaction Hydrolysis of Ala-|-Gly bond in repressor LexA.. Represses a number of genes involved in the response to DNA damage (SOS response), including recA and lexA. In the presence of single-stranded DNA, RecA interacts with LexA causing an autocatalytic cleavage which disrupts the DNA-binding part of LexA, leading to derepression of the SOS regulon and eventually DNA repair. The protein is LexA repressor of Lactobacillus acidophilus (strain ATCC 700396 / NCK56 / N2 / NCFM).